Reading from the N-terminus, the 508-residue chain is Glycerol kinase (508 aa).

An ADP-binding site is contributed by threonine 14. Residues threonine 14, threonine 15, and serine 16 each contribute to the ATP site. Threonine 14 lines the sn-glycerol 3-phosphate pocket. Position 18 (arginine 18) interacts with ADP. Sn-glycerol 3-phosphate-binding residues include arginine 84, glutamate 85, and tyrosine 136. Arginine 84, glutamate 85, and tyrosine 136 together coordinate glycerol. Histidine 232 bears the Phosphohistidine; by HPr mark. Residue aspartate 246 participates in sn-glycerol 3-phosphate binding. Aspartate 246 and glutamine 247 together coordinate glycerol. The ADP site is built by threonine 268 and glycine 311. Residues threonine 268, glycine 311, glutamine 315, and glycine 412 each contribute to the ATP site. 2 residues coordinate ADP: glycine 412 and asparagine 416.

This sequence belongs to the FGGY kinase family. Homotetramer and homodimer (in equilibrium). Post-translationally, the phosphoenolpyruvate-dependent sugar phosphotransferase system (PTS), including enzyme I, and histidine-containing protein (HPr) are required for the phosphorylation, which leads to the activation of the enzyme.

The catalysed reaction is glycerol + ATP = sn-glycerol 3-phosphate + ADP + H(+). It participates in polyol metabolism; glycerol degradation via glycerol kinase pathway; sn-glycerol 3-phosphate from glycerol: step 1/1. With respect to regulation, activated by phosphorylation and inhibited by fructose 1,6-bisphosphate (FBP). In terms of biological role, key enzyme in the regulation of glycerol uptake and metabolism. Catalyzes the phosphorylation of glycerol to yield sn-glycerol 3-phosphate. This Streptococcus pyogenes serotype M18 (strain MGAS8232) protein is Glycerol kinase.